The primary structure comprises 584 residues: High-affinity choline transporter 1 (584 aa).

At 1 to 6 (MTVHID) the chain is on the extracellular side. The chain crosses the membrane as a helical span at residues 7 to 27 (GIVAIVLFYLLILFVGLWAAW). The Cytoplasmic segment spans residues 28–50 (KSKNTSMEGAMDRSEAIMIGGRD). The helical transmembrane segment at 51 to 71 (IGLLVGGFTMTATWVGGGYIN) threads the bilayer. The Extracellular segment spans residues 72-83 (GTAEAVYVPGYG). A helical membrane pass occupies residues 84-104 (LAWAQAPFGYALSLVIGGLFF). Over 105–127 (AKPMRSRGYVTMLDPFQQMYGKR) the chain is Cytoplasmic. A helical membrane pass occupies residues 128-148 (MGGLLFIPALLGEIFWSAAIL). Over 149-166 (SALGATLSVIVDININVS) the chain is Extracellular. A helical membrane pass occupies residues 167–187 (VVVSAVIAVLYTLVGGLYSVA). At 188–193 (YTDVVQ) the chain is on the cytoplasmic side. Residues 194–214 (LFCIFLGLWISIPFALLNPAV) traverse the membrane as a helical segment. Topologically, residues 215 to 239 (TDIIVTANQEVYQEPWVGNIQSKDS) are extracellular. A helical membrane pass occupies residues 240–260 (LIWIDNFLLLMLGGIPWQVYF). Residues 261–276 (QRVLSASSATYAQVLS) lie on the Cytoplasmic side of the membrane. A helical transmembrane segment spans residues 277–297 (FLAAFGCVLMAIPSVLIGAIG). Residues 298 to 319 (TSTDWNQTSYGLPGPIGKNETD) are Extracellular-facing. N-linked (GlcNAc...) asparagine glycosylation occurs at N303. A helical membrane pass occupies residues 320 to 340 (MILPIVLQHLCPPYISFFGLG). At 341 to 378 (AVSAAVMSSADSSILSASSMFARNIYHLAFRQEASDKE) the chain is on the cytoplasmic side. The helical transmembrane segment at 379-399 (IVWVMRITIFLFGGAATSMAL) threads the bilayer. The Extracellular portion of the chain corresponds to 400–408 (LAQSIYGLW). The helical transmembrane segment at 409–429 (YLSSDLVYVIIFPQLISVLFV) threads the bilayer. At 430–437 (KGTNTYGS) the chain is on the cytoplasmic side. The chain crosses the membrane as a helical span at residues 438–458 (IAGYIIGFLLRISGGEPYLHM). At 459–487 (QPFIYYPGCYLDHSFGDDPVYVQRFPFKT) the chain is on the extracellular side. A helical transmembrane segment spans residues 488–508 (MAMLFSFLGNTGVSYLVKYLF). Residues 509–584 (VSGILPPKLD…NPELSKSGND (76 aa)) are Cytoplasmic-facing.

The protein belongs to the sodium:solute symporter (SSF) (TC 2.A.21) family. Post-translationally, phosphorylated. Specific for cholinergic neurons.

The protein localises to the membrane. In terms of biological role, imports choline from the extracellular space to the neuron with high affinity. Rate-limiting step in acetylcholine synthesis. Sodium ion and chloride ion dependent. This Torpedo marmorata (Marbled electric ray) protein is High-affinity choline transporter 1 (CHT1).